Reading from the N-terminus, the 482-residue chain is Lipoamide acyltransferase component of branched-chain alpha-keto acid dehydrogenase complex, mitochondrial (482 aa).

A mitochondrion-targeting transit peptide spans 1 to 61 (MAAVRMLRTW…HFLKTTAALR (61 aa)). The Lipoyl-binding domain occupies 64 to 139 (VVQFKLSDIG…YVGKPLVDIE (76 aa)). Lys-105 bears the N6-lipoyllysine mark. Lys-133 is modified (N6-succinyllysine). Positions 145–160 (DSEEDVVETPAVSHDE) are critical for association with PPM1K. Residues 147–168 (EEDVVETPAVSHDEHTHQEIKG) form a disordered region. Residues 157-168 (SHDEHTHQEIKG) show a composition bias toward basic and acidic residues. The Peripheral subunit-binding (PSBD) domain occupies 172-209 (LATPAVRRLAMENNIKLSEVVGSGKDGRILKEDILNYL). Lys-196 carries the post-translational modification N6-acetyllysine; alternate. Residue Lys-196 is modified to N6-succinyllysine; alternate. Lys-202 is modified (N6-acetyllysine). Residue Ser-220 is modified to Phosphoserine. An N6-acetyllysine mark is found at Lys-243 and Lys-250. At Lys-261 the chain carries N6-succinyllysine. Residue Lys-289 is modified to N6-acetyllysine; alternate. Position 289 is an N6-succinyllysine; alternate (Lys-289). Arg-291 is a binding site for CoA. 2 positions are modified to N6-acetyllysine: Lys-295 and Lys-304. Positions 306, 349, 378, 399, 400, 403, 424, and 426 each coordinate CoA. Lys-435 bears the N6-acetyllysine mark. At Lys-440 the chain carries N6-acetyllysine; alternate. At Lys-440 the chain carries N6-succinyllysine; alternate. Residues His-452 and Asp-456 contribute to the active site.

This sequence belongs to the 2-oxoacid dehydrogenase family. Forms a 24-polypeptide structural core with octahedral symmetry that represents the E2 component of the branched-chain alpha-ketoacid dehydrogenase (BCKDH) complex. The BCKDH complex is composed of three major building blocks E1, E2 and E3. It is organized around E2, a 24-meric cubic core composed of DBT, to which are associated 6 to 12 copies of E1, and approximately 6 copies of the dehydrogenase E3, a DLD dimer. Interacts with PPM1K with a 24:1 stoichiometry; the N-terminal region (residues 49-61) of PPM1K and C-terminal linker of the lipoyl domain of DBT/E2 (residues 145-160) are critical for this interaction whereas the lipoyl prosthetic group is dispensable. This interaction requires colocalization in mitochondria. PPM1K competes with BCKDK for binding to DBT; this interaction is modulated by branched-chain alpha-keto acids (BCKAs). At steady state, BCKDH holoenzyme preferentially binds BCKDK and BCKDHA is phosphorylated. In response to high levels of BCKAs, BCKDK is replaced by PPM1K leading to BCKDHA dephosphorylation. The cofactor is (R)-lipoate.

Its subcellular location is the mitochondrion matrix. The catalysed reaction is N(6)-[(R)-dihydrolipoyl]-L-lysyl-[protein] + 2-methylpropanoyl-CoA = N(6)-[(R)-S(8)-2-methylpropanoyldihydrolipoyl]-L-lysyl-[protein] + CoA. In terms of biological role, the branched-chain alpha-keto dehydrogenase complex catalyzes the overall conversion of alpha-keto acids to acyl-CoA and CO(2). It contains multiple copies of three enzymatic components: branched-chain alpha-keto acid decarboxylase (E1), lipoamide acyltransferase (E2) and lipoamide dehydrogenase (E3). Within this complex, the catalytic function of this enzyme is to accept, and to transfer to coenzyme A, acyl groups that are generated by the branched-chain alpha-keto acid decarboxylase component. In Homo sapiens (Human), this protein is Lipoamide acyltransferase component of branched-chain alpha-keto acid dehydrogenase complex, mitochondrial.